A 154-amino-acid chain; its full sequence is Ascorbate-specific PTS system EIIA component (154 aa).

Residues 6–150 (SLAVNKSIRL…QEVLDLIDRT (145 aa)) enclose the PTS EIIA type-2 domain. H68 functions as the Tele-phosphohistidine intermediate in the catalytic mechanism. H68 is subject to Phosphohistidine.

The protein localises to the cytoplasm. In terms of biological role, the phosphoenolpyruvate-dependent sugar phosphotransferase system (sugar PTS), a major carbohydrate active transport system, catalyzes the phosphorylation of incoming sugar substrates concomitantly with their translocation across the cell membrane. The enzyme II UlaABC PTS system is involved in ascorbate transport. In Shigella dysenteriae serotype 1 (strain Sd197), this protein is Ascorbate-specific PTS system EIIA component (ulaC).